The sequence spans 1083 residues: Voltage-gated inwardly rectifying potassium channel KCNH3 (1083 aa).

Topologically, residues 1–228 (MPAMRGLLAP…HCGALRATWD (228 aa)) are cytoplasmic. The PAS domain occupies 18 to 90 (IATRFDGTHS…QQIRKALDEH (73 aa)). The PAC domain maps to 93–145 (FKAELILYRKSGLPFWCLLDVIPIKNEKGEVALFLVSHKDISETKNRGGPDRW). Basic and acidic residues predominate over residues 137-150 (KNRGGPDRWKETGG). The tract at residues 137 to 157 (KNRGGPDRWKETGGGRRRYGR) is disordered. A helical transmembrane segment spans residues 229 to 249 (GFILLATLYVAVTVPYSVCVS). Topologically, residues 250–259 (TAREPSAARG) are extracellular. The helical transmembrane segment at 260 to 280 (PPSVCDLAVEVLFILDIVLNF) threads the bilayer. Topologically, residues 281–302 (RTTFVSKSGQVVFAPKSICLHY) are cytoplasmic. Residues 303-323 (VTTWFLLDVIAALPFDLLHAF) form a helical membrane-spanning segment. Residues 324–331 (KVNVYFGA) are Extracellular-facing. Residues 332 to 352 (HLLKTVRLLRLLRLLPRLDRY) form a helical; Voltage-sensor membrane-spanning segment. At 353–361 (SQYSAVVLT) the chain is on the cytoplasmic side. The chain crosses the membrane as a helical span at residues 362–382 (LLMAVFALLAHWVACVWFYIG). Residues 383 to 453 (QREIESSESE…GGPSLRSAYI (71 aa)) lie on the Extracellular side of the membrane. Asn-421, Asn-428, and Asn-436 each carry an N-linked (GlcNAc...) asparagine glycan. An intramembrane region (pore-forming) is located at residues 454-474 (TSLYFALSSLTSVGFGNVSAN). The short motif at 465-470 (SVGFGN) is the Selectivity filter element. Residues 475–479 (TDTEK) are Extracellular-facing. The helical transmembrane segment at 480-500 (IFSICTMLIGALMHAVVFGNV) threads the bilayer. Residues 501–1083 (TAIIQRMYAR…QWTQEEGTGV (583 aa)) are Cytoplasmic-facing. An a nucleoside 3',5'-cyclic phosphate-binding site is contributed by 582–697 (LFEAASRGCL…FAPRFSRGLR (116 aa)). 3 disordered regions span residues 729-810 (EEKE…LRLP), 832-873 (CGSD…SEAR), and 972-1055 (MAPW…ALPW). The span at 773-785 (TAPRPRLGGRGRP) shows a compositional bias: basic residues. Positions 844 to 861 (GQSGPECSSSPSPGPESG) are enriched in low complexity.

Belongs to the potassium channel family. H (Eag) (TC 1.A.1.20) subfamily. Kv12.2/KCNH3 sub-subfamily. The potassium channel is probably composed of a homo- or heterotetrameric complex of pore-forming alpha subunits that can associate with modulating beta subunits. Interacts with KCNE1 and KCNE3; these interactions regulate KCNH3 trafficking to the plasma membrane and its subsequent voltage-gated potassium channel activity. N-glycosylated. N-glycosylation mediates traffick to the cell membrane but is not necessary for voltage-gated potassium channel activity. In terms of tissue distribution, detected only in brain, in particular in the telencephalon. Detected in the cerebral cortex, occipital pole, frontal and temporal lobe, putamen, amygdala, hippocampus and caudate nucleus.

It localises to the cell membrane. It carries out the reaction K(+)(in) = K(+)(out). Functionally, pore-forming (alpha) subunit of a voltage-gated inwardly rectifying potassium channel. Charactherized by a fast rate of activation during depolarization followed by a rapid inactivation at much more depolarized value causing inward rectification due to a C-type inactivation mechanism. Exhibits a rapid recovery from inactivation. In Homo sapiens (Human), this protein is Voltage-gated inwardly rectifying potassium channel KCNH3.